We begin with the raw amino-acid sequence, 155 residues long: Ribosomal RNA large subunit methyltransferase H (155 aa).

S-adenosyl-L-methionine-binding positions include leucine 72, glycine 103, and 122–127; that span reads LSPLTL.

This sequence belongs to the RNA methyltransferase RlmH family. In terms of assembly, homodimer.

The protein resides in the cytoplasm. It carries out the reaction pseudouridine(1915) in 23S rRNA + S-adenosyl-L-methionine = N(3)-methylpseudouridine(1915) in 23S rRNA + S-adenosyl-L-homocysteine + H(+). Specifically methylates the pseudouridine at position 1915 (m3Psi1915) in 23S rRNA. In Histophilus somni (strain 129Pt) (Haemophilus somnus), this protein is Ribosomal RNA large subunit methyltransferase H.